The chain runs to 116 residues: Protein TCL1B1 (116 aa).

Belongs to the TCL1 family.

The sequence is that of Protein TCL1B1 (Tcl1b1) from Mus musculus (Mouse).